Reading from the N-terminus, the 505-residue chain is Buccalin (505 aa).

A signal peptide spans 1–25 (MAHHRGHRHILLYVSLALSLGLALA). Positions 26-62 (EDATDPSDDTGSFDDVEAVSEEADLDPYSMSQELNKR) are excised as a propeptide. V74 carries the valine amide modification. Residues L88 and L102 each carry the leucine amide modification. Q106 bears the Pyrrolidone carboxylic acid mark. Position 116 is an isoleucine amide (I116). Leucine amide is present on residues L129, L143, L157, L171, L185, L199, L213, L227, L241, L254, L267, L281, L294, L307, L321, and L335. At E349 the chain carries Glutamic acid 1-amide. Leucine amide is present on residues L363, L377, L391, L405, L419, and L433. 2 positions are modified to isoleucine amide: I447 and I461. Q465 carries the pyrrolidone carboxylic acid modification. Positions 472-505 (SGRLGKRSSSEQEEEDVRQVEKRSTTEEQSSKSL) are disordered. L475 carries the leucine amide modification. Basic and acidic residues predominate over residues 488–505 (VRQVEKRSTTEEQSSKSL). A propeptide spanning residues 495–505 (STTEEQSSKSL) is cleaved from the precursor.

Cholinergic motor neuron B15 innervating buccal muscles in Aplysia.

It is found in the secreted. In terms of biological role, modulatory neuropeptide, acting presynaptically on nerve terminals to inhibit acetylcholine release. The sequence is that of Buccalin from Aplysia californica (California sea hare).